Here is a 72-residue protein sequence, read N- to C-terminus: Conotoxin Lt6.3 (72 aa).

An N-terminal signal peptide occupies residues 1 to 22; it reads MKLTSVVIVAVLFLAACQLTTS. Positions 23-46 are excised as a propeptide; the sequence is DGSRGTWKDRAVRSITKVSMLRWP. 3 disulfides stabilise this stretch: Cys-47–Cys-61, Cys-54–Cys-64, and Cys-60–Cys-71.

The protein belongs to the conotoxin O1 superfamily. In terms of tissue distribution, expressed by the venom duct.

The protein resides in the secreted. This is Conotoxin Lt6.3 from Conus litteratus (Lettered cone).